Here is a 308-residue protein sequence, read N- to C-terminus: uncharacterized protein (308 aa).

The region spanning 1-60 (MNYSLKQLKVFVTVAQEKSFSRAGERIGLSQSAVSHSVKELENHTGVRLLDRTTREVVLT) is the HTH lysR-type domain. The segment at residues 20–39 (FSRAGERIGLSQSAVSHSVK) is a DNA-binding region (H-T-H motif).

This sequence belongs to the LysR transcriptional regulatory family.

This is an uncharacterized protein from Shigella flexneri.